The sequence spans 305 residues: Thyroxine 5-deiodinase (305 aa).

At 1 to 43 the chain is on the cytoplasmic side; it reads MPGQAGRRRLVGGGCRGSQGPLGGAATMLRSLLLHSLRLCAQT. The chain crosses the membrane as a helical; Signal-anchor for type II membrane protein span at residues 44 to 63; that stretch reads ASCLVLFPRFLGTACMLWLL. The Extracellular segment spans residues 64 to 305; it reads DFLCIRKHLL…QLHGPQPRRV (242 aa). Residues 79–98 are disordered; the sequence is GEPETEVELNSDGDEVPPDD. Residues 82–96 show a composition bias toward acidic residues; the sequence is ETEVELNSDGDEVPP. The active site involves Sec-171. Residue Sec-171 is a non-standard amino acid, selenocysteine.

The protein belongs to the iodothyronine deiodinase family. As to quaternary structure, monomer. Homodimer. May undergo minor heretodimerization with DIO1 and DIO2. As to expression, expressed in brain only.

The protein localises to the cell membrane. It localises to the endosome membrane. It catalyses the reaction 3,3',5'-triiodo-L-thyronine + iodide + A + H(+) = L-thyroxine + AH2. The enzyme catalyses 3,3'-diiodo-L-thyronine + iodide + A + H(+) = 3,3',5-triiodo-L-thyronine + AH2. It carries out the reaction 3-iodo-L-thyronine + iodide + A + H(+) = 3,5-diiodo-L-thyronine + AH2. The catalysed reaction is L-thyronine + iodide + A + H(+) = 3-iodo-L-thyronine + AH2. It catalyses the reaction 3',5'-diiodo-L-thyronine + iodide + A + H(+) = 3,3',5'-triiodo-L-thyronine + AH2. The enzyme catalyses 3'-iodo-L-thyronine + iodide + A + H(+) = 3,3'-diiodo-L-thyronine + AH2. It carries out the reaction 3,3',5'-triiodothyronamine + iodide + A + H(+) = 3,3',5,5'-tetraiodothyronamine + AH2. The catalysed reaction is 3',5'-diiodothyronamine + iodide + A + H(+) = 3,3',5'-triiodothyronamine + AH2. It catalyses the reaction 3,3'-diiodothyronamine + iodide + A + H(+) = 3,3',5-triiodothyronamine + AH2. The enzyme catalyses 3-iodothyronamine + iodide + A + H(+) = 3,5-diiodothyronamine + AH2. It carries out the reaction 3'-iodothyronamine + iodide + A + H(+) = 3,3'-diiodothyronamine + AH2. The catalysed reaction is thyronamine + iodide + A + H(+) = 3-iodothyronamine + AH2. Its function is as follows. Plays a crucial role in the metabolism of thyroid hormones (TH) and has specific roles in TH activation and inactivation by deiodination, particularly in different tissues. Catalyzes the deiodination of L-thyroxine (T4) to 3,3',5'-triiodothyronine (rT3), 3,5-diiodothyronine (3,5-T2) to 3-monoiodothyronine (3-T1), rT3 to 3',5'-diiodothyronine (3',5'-T2) and 3,3'-diiodothyronine (3,3'-T2) to 3'-monoiodothyronine (3'-T1) via inner-ring deiodination (IRD). Catalyzes the deiodination of 3,5,3'-triiodothyronine (T3) to 3,3'-diiodothyronine (3,3'-T2) via IRD. Catalyzes the deiodination of 3-T1 to L-thyronine (T0) via outer-ring deiodination (ORD). Catalyzes the tyrosyl ring deiodinations of 3,3',5,5'-tetraiodothyronamine, 3,3',5'-triiodothyronamine, 3,5,3'-triiodothyronamine, 3,5-diiodothyronamine, 3,3'-diiodothyronamine and 3-iodothyronamine. The chain is Thyroxine 5-deiodinase (DIO3) from Sus scrofa (Pig).